The primary structure comprises 877 residues: DNA mismatch repair protein MutS (877 aa).

Position 627–634 (627–634 (GPNMAGKS)) interacts with ATP.

It belongs to the DNA mismatch repair MutS family.

Functionally, this protein is involved in the repair of mismatches in DNA. It is possible that it carries out the mismatch recognition step. This protein has a weak ATPase activity. The chain is DNA mismatch repair protein MutS from Dinoroseobacter shibae (strain DSM 16493 / NCIMB 14021 / DFL 12).